The sequence spans 342 residues: Sesquiterpene synthase MBR_09977 (342 aa).

The Mg(2+) site is built by Asp-91 and Asp-96. A DDXXXD motif motif is present at residues 91–96 (DDLFVD). Position 184 (Arg-184) interacts with substrate. Mg(2+)-binding residues include Asn-230, Ser-234, and Glu-238.

It belongs to the terpene synthase family. The cofactor is Mg(2+).

The catalysed reaction is (2E,6E)-farnesyl diphosphate + H2O = (+)-corvol ether B + diphosphate. The enzyme catalyses (2E,6E)-farnesyl diphosphate + H2O = (+)-corvol ether A + diphosphate. In terms of biological role, terpene synthase that catalyzes the conversion of (2E,6E)-farnesyl diphosphate (FPP) into sesquiterpenes which are important for fungi-environment interactions. Produces a mixture consisting of 8 sesquiterpenes including corvol ethers A and B, as well as traces of epizonarene, gamma-cadinene, delta-cadinene, alpha-cadinene, alpha-cadinol, and an unidentified sesquiterpene. The major product is corvol ether A. In Metarhizium brunneum (strain ARSEF 3297), this protein is Sesquiterpene synthase MBR_09977.